Here is a 643-residue protein sequence, read N- to C-terminus: uncharacterized protein (643 aa).

Residues 9-29 form a helical membrane-spanning segment; the sequence is IVLALLLLLLPVVCGDVSVYK.

Its subcellular location is the membrane. This is an uncharacterized protein from Methanocaldococcus jannaschii (strain ATCC 43067 / DSM 2661 / JAL-1 / JCM 10045 / NBRC 100440) (Methanococcus jannaschii).